Consider the following 526-residue polypeptide: ATP synthase subunit alpha (526 aa).

174-181 (GDRKTGKT) serves as a coordination point for ATP. Basic and acidic residues predominate over residues 505 to 520 (FEPARSEVKVETRPQE). Residues 505 to 526 (FEPARSEVKVETRPQEEEGEEG) are disordered.

It belongs to the ATPase alpha/beta chains family. As to quaternary structure, F-type ATPases have 2 components, CF(1) - the catalytic core - and CF(0) - the membrane proton channel. CF(1) has five subunits: alpha(3), beta(3), gamma(1), delta(1), epsilon(1). CF(0) has three main subunits: a(1), b(2) and c(9-12). The alpha and beta chains form an alternating ring which encloses part of the gamma chain. CF(1) is attached to CF(0) by a central stalk formed by the gamma and epsilon chains, while a peripheral stalk is formed by the delta and b chains.

The protein resides in the cell membrane. The enzyme catalyses ATP + H2O + 4 H(+)(in) = ADP + phosphate + 5 H(+)(out). Its function is as follows. Produces ATP from ADP in the presence of a proton gradient across the membrane. The alpha chain is a regulatory subunit. The sequence is that of ATP synthase subunit alpha from Rubrobacter xylanophilus (strain DSM 9941 / JCM 11954 / NBRC 16129 / PRD-1).